Reading from the N-terminus, the 269-residue chain is Spermatogenesis-associated serine-rich protein 1 (269 aa).

Over residues 1–14 (MESSKDTQHGDALE) the composition is skewed to basic and acidic residues. A disordered region spans residues 1-92 (MESSKDTQHG…SKVSLPEIPK (92 aa)). The segment covering 18–38 (CLANRTSSRQNKRTSLSSSDG) has biased composition (polar residues). Position 54 is a phosphothreonine (Thr54). Low complexity predominate over residues 67 to 86 (SSSSSSSSSSAQSNRSSKVS). Ser72, Ser75, and Ser82 each carry phosphoserine.

The polypeptide is Spermatogenesis-associated serine-rich protein 1 (Spats1) (Mus musculus (Mouse)).